Reading from the N-terminus, the 503-residue chain is Probable inactive beta-glucosidase 33 (503 aa).

A signal peptide spans 1–30 (MATGELALVSSLFIVVVFLLLGAVAREASA). A beta-D-glucoside-binding positions include Gln50, His150, and 195–196 (NQ). Cys215 and Cys223 are joined by a disulfide. Residue Asn222 is glycosylated (N-linked (GlcNAc...) asparagine). The a beta-D-glucoside site is built by Tyr339 and Glu399. Glu399 functions as the Nucleophile in the catalytic mechanism. Asn436 carries an N-linked (GlcNAc...) asparagine glycan. Residues Trp446, 453-454 (EF), and Phe462 each bind a beta-D-glucoside.

It belongs to the glycosyl hydrolase 1 family.

The protein is Probable inactive beta-glucosidase 33 (BGLU33) of Oryza sativa subsp. japonica (Rice).